A 61-amino-acid chain; its full sequence is Large ribosomal subunit protein bL28 (61 aa).

It belongs to the bacterial ribosomal protein bL28 family.

The sequence is that of Large ribosomal subunit protein bL28 from Geobacillus thermodenitrificans (strain NG80-2).